The following is a 462-amino-acid chain: MIQIKLWQGRFSKDTARIFDEFNASIMVDINLFEYDVMGSVAHVKMLSKCDIIPEDEGKLIVNTLYEILNDFKEGKIEFDMSDEDVHMLIEKELIKRIGQVGKKVHTARSRNDQVVLDERLFCREKNLYLQELIKNLIDTIIKLAEENIDTIMPGFTHLQKAQPVLFSHYILAYAQMLKRDLLRFRQNFISINLNPLGSAALAGTTFDIDRFFVADQLEFDGVTENSIDTVSDRDFILEMLFNIAMLQMHLSRLAEDFIIFNTDEFRFIELDDAFCSGSSIMPQKKNPDALELIRGKTGRTFGNLIGLLTVLKALPLSYNKDMQEDKEFLFDSIDTAEKSLIIVNEILKTLKVNKENMLLACKSGFINATDLADYLVTKGVAFRDAHFVVGNIVKYCIENNKSLEELSTEEFKRFCDKIEEDVFKFISLENCIKRRKSYGATSPELVKKQIENLKEFLRAYE.

It belongs to the lyase 1 family. Argininosuccinate lyase subfamily.

Its subcellular location is the cytoplasm. The enzyme catalyses 2-(N(omega)-L-arginino)succinate = fumarate + L-arginine. It functions in the pathway amino-acid biosynthesis; L-arginine biosynthesis; L-arginine from L-ornithine and carbamoyl phosphate: step 3/3. This chain is Argininosuccinate lyase, found in Caldicellulosiruptor saccharolyticus (strain ATCC 43494 / DSM 8903 / Tp8T 6331).